The following is a 726-amino-acid chain: Catalase-peroxidase (726 aa).

The disordered stretch occupies residues Met-1–Ser-33. Positions Trp-105–Tyr-226 form a cross-link, tryptophyl-tyrosyl-methioninium (Trp-Tyr) (with M-252). Catalysis depends on His-106, which acts as the Proton acceptor. The segment at residues Tyr-226–Met-252 is a cross-link (tryptophyl-tyrosyl-methioninium (Tyr-Met) (with W-105)). His-267 contacts heme b.

Belongs to the peroxidase family. Peroxidase/catalase subfamily. In terms of assembly, homodimer or homotetramer. Requires heme b as cofactor. In terms of processing, formation of the three residue Trp-Tyr-Met cross-link is important for the catalase, but not the peroxidase activity of the enzyme.

The enzyme catalyses H2O2 + AH2 = A + 2 H2O. It catalyses the reaction 2 H2O2 = O2 + 2 H2O. In terms of biological role, bifunctional enzyme with both catalase and broad-spectrum peroxidase activity. This chain is Catalase-peroxidase, found in Salmonella choleraesuis (strain SC-B67).